The following is a 508-amino-acid chain: Phosphoglycerate kinase A (508 aa).

(2R)-3-phosphoglycerate is bound by residues Val32, Asp33, Phe34, Asn35, Arg48, Ser70, His71, Gly73, Arg74, Arg224, His260, and Arg261. Positions 306 and 307 each coordinate ADP. Gly306 serves as a coordination point for CDP. AMP-binding residues include Ala307 and Lys308. Position 307 (Ala307) interacts with ATP. A Mg(2+)-binding site is contributed by Ala307. Lys308 contributes to the (2R)-3-phosphoglycerate binding site. Glu311 contacts CDP. Glu311 is a Mg(2+) binding site. 2 residues coordinate ADP: Lys312 and Gly330. Lys312 provides a ligand contact to AMP. Lys312 provides a ligand contact to ATP. Gly330 is a binding site for CDP. Positions 331 and 403 each coordinate AMP. ATP contacts are provided by Ala331 and Ala403. Ala403 and Asn427 together coordinate ADP. CDP is bound by residues Gly428 and Phe433. Phe433, Glu434, Glu466, and Ser467 together coordinate ADP. Glu434 lines the AMP pocket. Positions 434, 466, and 467 each coordinate ATP. Residue Glu466 coordinates Mg(2+).

It belongs to the phosphoglycerate kinase family. In terms of assembly, monomer. The cofactor is Mg(2+).

The enzyme catalyses (2R)-3-phosphoglycerate + ATP = (2R)-3-phospho-glyceroyl phosphate + ADP. It functions in the pathway carbohydrate degradation; glycolysis; pyruvate from D-glyceraldehyde 3-phosphate: step 2/5. The polypeptide is Phosphoglycerate kinase A (Trypanosoma brucei brucei).